Here is a 170-residue protein sequence, read N- to C-terminus: NADH-quinone oxidoreductase subunit B (170 aa).

[4Fe-4S] cluster-binding residues include Cys42, Cys43, Cys107, and Cys136.

This sequence belongs to the complex I 20 kDa subunit family. As to quaternary structure, NDH-1 is composed of 14 different subunits. Subunits NuoB, C, D, E, F, and G constitute the peripheral sector of the complex. [4Fe-4S] cluster serves as cofactor.

The protein resides in the cell inner membrane. It carries out the reaction a quinone + NADH + 5 H(+)(in) = a quinol + NAD(+) + 4 H(+)(out). NDH-1 shuttles electrons from NADH, via FMN and iron-sulfur (Fe-S) centers, to quinones in the respiratory chain. The immediate electron acceptor for the enzyme in this species is believed to be ubiquinone. Couples the redox reaction to proton translocation (for every two electrons transferred, four hydrogen ions are translocated across the cytoplasmic membrane), and thus conserves the redox energy in a proton gradient. This is NADH-quinone oxidoreductase subunit B from Campylobacter concisus (strain 13826).